A 222-amino-acid polypeptide reads, in one-letter code: Uridine kinase (222 aa).

13 to 20 provides a ligand contact to ATP; that stretch reads GGSGAGKT.

It belongs to the uridine kinase family.

It localises to the cytoplasm. The catalysed reaction is uridine + ATP = UMP + ADP + H(+). It carries out the reaction cytidine + ATP = CMP + ADP + H(+). It functions in the pathway pyrimidine metabolism; CTP biosynthesis via salvage pathway; CTP from cytidine: step 1/3. Its pathway is pyrimidine metabolism; UMP biosynthesis via salvage pathway; UMP from uridine: step 1/1. This is Uridine kinase from Chlamydia pneumoniae (Chlamydophila pneumoniae).